Here is a 209-residue protein sequence, read N- to C-terminus: Uracil phosphoribosyltransferase (209 aa).

5-phospho-alpha-D-ribose 1-diphosphate-binding positions include arginine 79, arginine 104, and 131-139 (DPMLATGGS). Uracil contacts are provided by residues isoleucine 194 and 199-201 (GDA). Aspartate 200 serves as a coordination point for 5-phospho-alpha-D-ribose 1-diphosphate.

Belongs to the UPRTase family. Mg(2+) is required as a cofactor.

The catalysed reaction is UMP + diphosphate = 5-phospho-alpha-D-ribose 1-diphosphate + uracil. It participates in pyrimidine metabolism; UMP biosynthesis via salvage pathway; UMP from uracil: step 1/1. Allosterically activated by GTP. Catalyzes the conversion of uracil and 5-phospho-alpha-D-ribose 1-diphosphate (PRPP) to UMP and diphosphate. The chain is Uracil phosphoribosyltransferase from Lactiplantibacillus plantarum (strain ATCC BAA-793 / NCIMB 8826 / WCFS1) (Lactobacillus plantarum).